Consider the following 444-residue polypeptide: Xylose isomerase (444 aa).

Catalysis depends on residues His-101 and Asp-104. Positions 232, 268, 271, 296, 307, 309, and 339 each coordinate Mg(2+).

Belongs to the xylose isomerase family. In terms of assembly, homotetramer. The cofactor is Mg(2+).

It is found in the cytoplasm. The enzyme catalyses alpha-D-xylose = alpha-D-xylulofuranose. This is Xylose isomerase from Thermotoga maritima (strain ATCC 43589 / DSM 3109 / JCM 10099 / NBRC 100826 / MSB8).